The primary structure comprises 407 residues: MSPVPLKNAERAHSGVRTVSVLGATGSIGDSTMDLIRAEPERYRVEALTGNANVAGLAKLAKEFNARFVAVADPARLGELRAALAGTDVACGAGESAVIEAAARPADWVMAAISGAAGLKPALAAVDRGTTVALANKECLVCAGDFFMSRATAAGAQILPADSEHNALFQALASGNRHELTRVIITASGGPFRTWAAADIEQATLAQALKHPNWSMGQKITIDSASMMNKGLEVIEASYLFALSPDEIDVLVHPQSIVHGLVEFADRSVVAQLGAPDMRIPIAHCLGFPDRITGRAAKLDLAKIGQLTFEAPDFTRFPGLRLAYDALRTGNGATTVYNAANEVAVAAFIAQKIRFGAIARLVEDTLNSWVRAGNQAPLGSADDAIALDQQARNLAATLLPQIAAKAS.

NADPH-binding residues include T25, G26, S27, I28, N53, and N136. Residue K137 participates in 1-deoxy-D-xylulose 5-phosphate binding. Residue E138 participates in NADPH binding. Mn(2+) is bound at residue D162. 4 residues coordinate 1-deoxy-D-xylulose 5-phosphate: S163, E164, S188, and H211. E164 lines the Mn(2+) pocket. G217 contributes to the NADPH binding site. 1-deoxy-D-xylulose 5-phosphate is bound by residues S224, N229, K230, and E233. Mn(2+) is bound at residue E233.

It belongs to the DXR family. Mg(2+) serves as cofactor. It depends on Mn(2+) as a cofactor.

It carries out the reaction 2-C-methyl-D-erythritol 4-phosphate + NADP(+) = 1-deoxy-D-xylulose 5-phosphate + NADPH + H(+). Its pathway is isoprenoid biosynthesis; isopentenyl diphosphate biosynthesis via DXP pathway; isopentenyl diphosphate from 1-deoxy-D-xylulose 5-phosphate: step 1/6. Functionally, catalyzes the NADPH-dependent rearrangement and reduction of 1-deoxy-D-xylulose-5-phosphate (DXP) to 2-C-methyl-D-erythritol 4-phosphate (MEP). This chain is 1-deoxy-D-xylulose 5-phosphate reductoisomerase, found in Rhodopseudomonas palustris (strain TIE-1).